The following is a 160-amino-acid chain: Endoribonuclease YbeY (160 aa).

3 residues coordinate Zn(2+): H125, H129, and H135.

Belongs to the endoribonuclease YbeY family. Zn(2+) is required as a cofactor.

It is found in the cytoplasm. Functionally, single strand-specific metallo-endoribonuclease involved in late-stage 70S ribosome quality control and in maturation of the 3' terminus of the 16S rRNA. This Dehalococcoides mccartyi (strain ATCC BAA-2100 / JCM 16839 / KCTC 5957 / BAV1) protein is Endoribonuclease YbeY.